Consider the following 109-residue polypeptide: Phosphoribosyl-ATP pyrophosphatase (109 aa).

Belongs to the PRA-PH family.

The protein localises to the cytoplasm. The enzyme catalyses 1-(5-phospho-beta-D-ribosyl)-ATP + H2O = 1-(5-phospho-beta-D-ribosyl)-5'-AMP + diphosphate + H(+). It functions in the pathway amino-acid biosynthesis; L-histidine biosynthesis; L-histidine from 5-phospho-alpha-D-ribose 1-diphosphate: step 2/9. The polypeptide is Phosphoribosyl-ATP pyrophosphatase (Azorhizobium caulinodans (strain ATCC 43989 / DSM 5975 / JCM 20966 / LMG 6465 / NBRC 14845 / NCIMB 13405 / ORS 571)).